The chain runs to 493 residues: Glutamyl-tRNA(Gln) amidotransferase subunit A (493 aa).

Residues K81 and S156 each act as charge relay system in the active site. S180 functions as the Acyl-ester intermediate in the catalytic mechanism.

It belongs to the amidase family. GatA subfamily. In terms of assembly, heterotrimer of A, B and C subunits.

It catalyses the reaction L-glutamyl-tRNA(Gln) + L-glutamine + ATP + H2O = L-glutaminyl-tRNA(Gln) + L-glutamate + ADP + phosphate + H(+). Its function is as follows. Allows the formation of correctly charged Gln-tRNA(Gln) through the transamidation of misacylated Glu-tRNA(Gln) in organisms which lack glutaminyl-tRNA synthetase. The reaction takes place in the presence of glutamine and ATP through an activated gamma-phospho-Glu-tRNA(Gln). The polypeptide is Glutamyl-tRNA(Gln) amidotransferase subunit A (Mycobacterium avium (strain 104)).